Here is a 282-residue protein sequence, read N- to C-terminus: 4-diphosphocytidyl-2-C-methyl-D-erythritol kinase (282 aa).

Residue lysine 13 is part of the active site. Residue 96–106 coordinates ATP; sequence PMGGGIGGGSS. The active site involves aspartate 138.

Belongs to the GHMP kinase family. IspE subfamily.

The enzyme catalyses 4-CDP-2-C-methyl-D-erythritol + ATP = 4-CDP-2-C-methyl-D-erythritol 2-phosphate + ADP + H(+). It participates in isoprenoid biosynthesis; isopentenyl diphosphate biosynthesis via DXP pathway; isopentenyl diphosphate from 1-deoxy-D-xylulose 5-phosphate: step 3/6. Its function is as follows. Catalyzes the phosphorylation of the position 2 hydroxy group of 4-diphosphocytidyl-2C-methyl-D-erythritol. This chain is 4-diphosphocytidyl-2-C-methyl-D-erythritol kinase, found in Pseudomonas syringae pv. tomato (strain ATCC BAA-871 / DC3000).